Here is a 90-residue protein sequence, read N- to C-terminus: Small ribosomal subunit protein bS18 (90 aa).

Belongs to the bacterial ribosomal protein bS18 family. Part of the 30S ribosomal subunit. Forms a tight heterodimer with protein bS6.

Binds as a heterodimer with protein bS6 to the central domain of the 16S rRNA, where it helps stabilize the platform of the 30S subunit. The polypeptide is Small ribosomal subunit protein bS18 (Bordetella bronchiseptica (strain ATCC BAA-588 / NCTC 13252 / RB50) (Alcaligenes bronchisepticus)).